A 72-amino-acid chain; its full sequence is MKLLPLLFVILIVCAILPDEASCDQSELERKEENFKDESREIVKRSCKKECSGSRRTKKCMQKCNREHGHGR.

The first 23 residues, 1–23, serve as a signal peptide directing secretion; the sequence is MKLLPLLFVILIVCAILPDEASC. Residues 24 to 43 constitute a propeptide that is removed on maturation; that stretch reads DQSELERKEENFKDESREIV. 2 disulfide bridges follow: Cys47/Cys64 and Cys51/Cys60. Position 70 is a histidine amide (His70).

It belongs to the short scorpion toxin superfamily. Potassium channel inhibitor kappa-KTx family. Kappa-KTx 5 subfamily. Expressed by the venom gland.

Its subcellular location is the secreted. Functionally, weak blocker of potassium channels Kv1.1/KCNA1 (IC(50)=578.5 nM-9.9 uM) and Kv1.6/KCNA6 (~60% block at 30 uM of toxin). Acts by binding to the pore and occluding it. Has a voltage-dependent mode of action, which can be explained by a high content of basic residues causing repulsions at higher membrane voltages. Shows a weak interaction with muscle-type nicotinic acetylcholine receptors (nAChR), since it inhibits alpha-bungarotoxin binding to muscle-type nAChR from T.californica (IC(50)=1.4 uM). This suggests it probably weakly inhibits muscle nAChR. The mode of binding to potassium channels of this toxin differs from its homologs (including HefuTx1), since it lacks the key aromatic residue of the functional dyad. In contrast, its functionally important site is composed of a number of basic residues. The sequence is that of Potassium channel toxin kappa-KTx 5.1 from Heterometrus laoticus (Thai giant scorpion).